The following is a 321-amino-acid chain: Lipoyl synthase (321 aa).

7 residues coordinate [4Fe-4S] cluster: Cys68, Cys73, Cys79, Cys94, Cys98, Cys101, and Ser308. One can recognise a Radical SAM core domain in the interval 80–297; that stretch reads FNHGTATFMI…KDYAEEIGFT (218 aa).

The protein belongs to the radical SAM superfamily. Lipoyl synthase family. Requires [4Fe-4S] cluster as cofactor.

The protein resides in the cytoplasm. It catalyses the reaction [[Fe-S] cluster scaffold protein carrying a second [4Fe-4S](2+) cluster] + N(6)-octanoyl-L-lysyl-[protein] + 2 oxidized [2Fe-2S]-[ferredoxin] + 2 S-adenosyl-L-methionine + 4 H(+) = [[Fe-S] cluster scaffold protein] + N(6)-[(R)-dihydrolipoyl]-L-lysyl-[protein] + 4 Fe(3+) + 2 hydrogen sulfide + 2 5'-deoxyadenosine + 2 L-methionine + 2 reduced [2Fe-2S]-[ferredoxin]. It participates in protein modification; protein lipoylation via endogenous pathway; protein N(6)-(lipoyl)lysine from octanoyl-[acyl-carrier-protein]: step 2/2. In terms of biological role, catalyzes the radical-mediated insertion of two sulfur atoms into the C-6 and C-8 positions of the octanoyl moiety bound to the lipoyl domains of lipoate-dependent enzymes, thereby converting the octanoylated domains into lipoylated derivatives. The polypeptide is Lipoyl synthase (Shewanella loihica (strain ATCC BAA-1088 / PV-4)).